The primary structure comprises 319 residues: tRNA (guanine-N(7)-)-methyltransferase (319 aa).

S-adenosyl-L-methionine contacts are provided by Glu-28, Glu-51, and Asp-75. Residues Asp-134 and 167 to 170 (TKYE) each bind substrate.

The protein belongs to the class I-like SAM-binding methyltransferase superfamily. TrmB family.

The catalysed reaction is guanosine(46) in tRNA + S-adenosyl-L-methionine = N(7)-methylguanosine(46) in tRNA + S-adenosyl-L-homocysteine. It participates in tRNA modification; N(7)-methylguanine-tRNA biosynthesis. Functionally, catalyzes the formation of N(7)-methylguanine at position 46 (m7G46) in tRNA. The sequence is that of tRNA (guanine-N(7)-)-methyltransferase from Coprothermobacter proteolyticus (strain ATCC 35245 / DSM 5265 / OCM 4 / BT).